Reading from the N-terminus, the 501-residue chain is MKLKRKRVKPIALDDVTIIDDGRLRKAITAAALGNAMEWFDFGVYGFVAYALGQVFFPGADPGVQMIAALATFSVPFLIRPLGGVFFGALGDKYGRQKILAITIIIMSISTFCIGLIPSYERIGIWAPILLLLAKMAQGFSVGGEYTGASIFVAEYSPDRKRGFMGSWLDFGSIAGFVLGAGVVVLISTLIGEQAFLAWGWRLPFFLALPLGLIGLYLRHALEETPAFRQHVEKLEQNDRDGLKAGPGVSFREIATHHWKSLLVCIGLVIATNVTYYMLLTYMPSYLSHSLHYSENHGVLIIIAIMIGMLFVQPVMGLLSDRFGRKPFVVIGSVAMFFLAVPSFMLINSDIIGLIFLGLLMLAVILNAFTGVMASTLPALFPTHIRYSALASAFNISVLIAGLTPTVAAWLVESSQNLYMPAYYLMVIAVIGLLTGLFMKETANKPLKGATPAASDLSEAKEILQEHHDNIEHKIEDITQQIAELEAKRQLLVAQHPRIND.

Residues 1–38 (MKLKRKRVKPIALDDVTIIDDGRLRKAITAAALGNAME) lie on the Cytoplasmic side of the membrane. Residues 39 to 59 (WFDFGVYGFVAYALGQVFFPG) traverse the membrane as a helical segment. Residues 60–66 (ADPGVQM) are Periplasmic-facing. Residues 67–87 (IAALATFSVPFLIRPLGGVFF) traverse the membrane as a helical segment. The Cytoplasmic segment spans residues 88–98 (GALGDKYGRQK). Residues 99–119 (ILAITIIIMSISTFCIGLIPS) traverse the membrane as a helical segment. Residues 120-122 (YER) are Periplasmic-facing. A helical membrane pass occupies residues 123–143 (IGIWAPILLLLAKMAQGFSVG). The Cytoplasmic segment spans residues 144–170 (GEYTGASIFVAEYSPDRKRGFMGSWLD). A helical membrane pass occupies residues 171–191 (FGSIAGFVLGAGVVVLISTLI). The Periplasmic portion of the chain corresponds to 192-195 (GEQA). Residues 196–216 (FLAWGWRLPFFLALPLGLIGL) traverse the membrane as a helical segment. The Cytoplasmic portion of the chain corresponds to 217 to 261 (YLRHALEETPAFRQHVEKLEQNDRDGLKAGPGVSFREIATHHWKS). A helical transmembrane segment spans residues 262 to 282 (LLVCIGLVIATNVTYYMLLTY). Residues 283–298 (MPSYLSHSLHYSENHG) are Periplasmic-facing. A helical transmembrane segment spans residues 299–319 (VLIIIAIMIGMLFVQPVMGLL). Over 320-326 (SDRFGRK) the chain is Cytoplasmic. Residues 327–347 (PFVVIGSVAMFFLAVPSFMLI) form a helical membrane-spanning segment. The Periplasmic segment spans residues 348-350 (NSD). A helical transmembrane segment spans residues 351-371 (IIGLIFLGLLMLAVILNAFTG). Residues 372–391 (VMASTLPALFPTHIRYSALA) are Cytoplasmic-facing. A helical transmembrane segment spans residues 392 to 412 (SAFNISVLIAGLTPTVAAWLV). At 413–417 (ESSQN) the chain is on the periplasmic side. Residues 418–438 (LYMPAYYLMVIAVIGLLTGLF) form a helical membrane-spanning segment. The Cytoplasmic segment spans residues 439–501 (MKETANKPLK…LVAQHPRIND (63 aa)). Positions 461 to 495 (KEILQEHHDNIEHKIEDITQQIAELEAKRQLLVAQ) form a coiled coil.

The protein belongs to the major facilitator superfamily. Sugar transporter (TC 2.A.1.1) family.

It localises to the cell inner membrane. Functionally, involved in uptake and accumulation of various osmoprotectants. Allows the uptake of glycine betaine, proline, ectoine, and pipecolic acid. May be a contributory factor in the infection progression within the host. In Dickeya dadantii (strain 3937) (Erwinia chrysanthemi (strain 3937)), this protein is Glycine betaine/proline/ectoine/pipecolic acid transporter OusA.